Here is a 790-residue protein sequence, read N- to C-terminus: Protein SEY1 (790 aa).

The Cytoplasmic portion of the chain corresponds to 1-692 (MELSEGELSH…KRSIVQHITQ (692 aa)). Residues 55–284 (GNNYHIISVF…VNNELFKPEY (230 aa)) form the GB1/RHD3-type G domain. 65–72 (GSQSTGKS) is a GTP binding site. Residues 693–713 (IPYYIYLIILVLGWNEFMAII) traverse the membrane as a helical segment. Residues 714 to 716 (RNP) lie on the Lumenal side of the membrane. Residues 717–737 (LFFSLSIVLGATVYVLYYLNL) traverse the membrane as a helical segment. The Cytoplasmic segment spans residues 738-790 (LKPAMLVAQRTMDEVIIMAKTKLREVLIDDHEVTGRQLNKIAGGKENIELDDM).

This sequence belongs to the TRAFAC class dynamin-like GTPase superfamily. GB1/RHD3 GTPase family. RHD3 subfamily.

The protein localises to the endoplasmic reticulum membrane. Cooperates with the reticulon proteins and tubule-shaping DP1 family proteins to generate and maintain the structure of the tubular endoplasmic reticulum network. Has GTPase activity, which is required for its function in ER organization. The polypeptide is Protein SEY1 (Candida dubliniensis (strain CD36 / ATCC MYA-646 / CBS 7987 / NCPF 3949 / NRRL Y-17841) (Yeast)).